Consider the following 189-residue polypeptide: Probable pericyclase scpY (189 aa).

This sequence belongs to the pericyclase pydY family.

It participates in mycotoxin biosynthesis. Functionally, probable pericyclase; part of the gene scp cluster that mediates the biosynthesis of a hirsutellone-like compound that has still to be identified. This Mollisia scopiformis (Conifer needle endophyte fungus) protein is Probable pericyclase scpY.